Here is a 546-residue protein sequence, read N- to C-terminus: Chaperonin GroEL (546 aa).

ATP is bound by residues 30–33 (TLGP), K51, 87–91 (DGTTT), G415, and D495.

It belongs to the chaperonin (HSP60) family. Forms a cylinder of 14 subunits composed of two heptameric rings stacked back-to-back. Interacts with the co-chaperonin GroES.

The protein resides in the cytoplasm. The catalysed reaction is ATP + H2O + a folded polypeptide = ADP + phosphate + an unfolded polypeptide.. Together with its co-chaperonin GroES, plays an essential role in assisting protein folding. The GroEL-GroES system forms a nano-cage that allows encapsulation of the non-native substrate proteins and provides a physical environment optimized to promote and accelerate protein folding. The protein is Chaperonin GroEL of Brucella melitensis biotype 1 (strain ATCC 23456 / CCUG 17765 / NCTC 10094 / 16M).